Reading from the N-terminus, the 465-residue chain is UDP-N-acetylmuramate--L-alanine ligase (465 aa).

ATP is bound at residue 112 to 118 (GTHGKTT).

This sequence belongs to the MurCDEF family.

Its subcellular location is the cytoplasm. The enzyme catalyses UDP-N-acetyl-alpha-D-muramate + L-alanine + ATP = UDP-N-acetyl-alpha-D-muramoyl-L-alanine + ADP + phosphate + H(+). It participates in cell wall biogenesis; peptidoglycan biosynthesis. Functionally, cell wall formation. In Burkholderia multivorans (strain ATCC 17616 / 249), this protein is UDP-N-acetylmuramate--L-alanine ligase.